A 206-amino-acid polypeptide reads, in one-letter code: Probable GTP-binding protein EngB (206 aa).

Positions 8-195 (RSDEVVLVGR…EDAVNSHFDA (188 aa)) constitute an EngB-type G domain. GTP contacts are provided by residues 16–23 (GRSNVGKS), 41–45 (GVTRQ), 60–63 (DLPG), 140–143 (NKMD), and 175–177 (ITA). Residues serine 23 and threonine 43 each contribute to the Mg(2+) site.

This sequence belongs to the TRAFAC class TrmE-Era-EngA-EngB-Septin-like GTPase superfamily. EngB GTPase family. Requires Mg(2+) as cofactor.

In terms of biological role, necessary for normal cell division and for the maintenance of normal septation. The sequence is that of Probable GTP-binding protein EngB from Halobacterium salinarum (strain ATCC 29341 / DSM 671 / R1).